The following is a 284-amino-acid chain: 16S rRNA (guanine(1405)-N(7))-methyltransferase (284 aa).

S-adenosyl-L-methionine-binding positions include Y73, 111–113 (HAS), R117, A142, D165, 191–192 (DL), L208, and Q217.

This sequence belongs to the methyltransferase superfamily. Aminoglycoside resistance family.

The catalysed reaction is guanosine(1405) in 16S rRNA + S-adenosyl-L-methionine = N(7)-methylguanosine(1405) in 16S rRNA + S-adenosyl-L-homocysteine. In terms of biological role, specifically methylates the N(7) position of guanine 1405 in 16S rRNA. Confers resistance to various aminoglycosides, including gentamicin and kanamycin. This is 16S rRNA (guanine(1405)-N(7))-methyltransferase (Krm) from Frankia casuarinae (strain DSM 45818 / CECT 9043 / HFP020203 / CcI3).